Here is a 334-residue protein sequence, read N- to C-terminus: Leucine-rich repeat-containing protein 39 (334 aa).

A coiled-coil region spans residues 10-47; it reads AVNAVKEVWEKRIKKLNEDLKREKEFQQKLVRIWEERV. 9 LRR repeats span residues 84–105, 107–128, 130–151, 153–176, 177–198, 200–221, 223–244, 246–267, and 269–290; these read QLQE…IGRF, NLIV…IGLL, RLQE…LSYC, SLEK…SNLL, KLTH…VLNM, ALEW…IERM, NLHT…ISSM, NLST…MEKM, and NLRF…PPSE.

Interacts with MYH7 (via C-terminus).

The protein localises to the cytoplasm. Its subcellular location is the myofibril. It is found in the sarcomere. It localises to the m line. In terms of biological role, component of the sarcomeric M-band which plays a role in myocyte response to biomechanical stress. May regulate expression of other M-band proteins via an SRF-dependent pathway. Important for normal contractile function in heart. This chain is Leucine-rich repeat-containing protein 39, found in Bos taurus (Bovine).